The chain runs to 299 residues: Oxygen-dependent coproporphyrinogen-III oxidase (299 aa).

Serine 92 lines the substrate pocket. Residues histidine 96 and histidine 106 each coordinate a divalent metal cation. The active-site Proton donor is the histidine 106. Residue 108–110 (NVR) participates in substrate binding. 2 residues coordinate a divalent metal cation: histidine 145 and histidine 175. Residues 239–274 (YVEFNLVYDRGTLFGLQSGGRAESILMSLPPRVRWE) form an important for dimerization region. 257–259 (GGR) is a substrate binding site.

It belongs to the aerobic coproporphyrinogen-III oxidase family. As to quaternary structure, homodimer. A divalent metal cation serves as cofactor.

It localises to the cytoplasm. The enzyme catalyses coproporphyrinogen III + O2 + 2 H(+) = protoporphyrinogen IX + 2 CO2 + 2 H2O. The protein operates within porphyrin-containing compound metabolism; protoporphyrin-IX biosynthesis; protoporphyrinogen-IX from coproporphyrinogen-III (O2 route): step 1/1. Its function is as follows. Involved in the heme biosynthesis. Catalyzes the aerobic oxidative decarboxylation of propionate groups of rings A and B of coproporphyrinogen-III to yield the vinyl groups in protoporphyrinogen-IX. The protein is Oxygen-dependent coproporphyrinogen-III oxidase of Xanthomonas euvesicatoria pv. vesicatoria (strain 85-10) (Xanthomonas campestris pv. vesicatoria).